We begin with the raw amino-acid sequence, 273 residues long: Putative pyruvate, phosphate dikinase regulatory protein (273 aa).

149 to 156 (GPSRTSKT) contributes to the ADP binding site.

It belongs to the pyruvate, phosphate/water dikinase regulatory protein family. PDRP subfamily.

The enzyme catalyses N(tele)-phospho-L-histidyl/L-threonyl-[pyruvate, phosphate dikinase] + ADP = N(tele)-phospho-L-histidyl/O-phospho-L-threonyl-[pyruvate, phosphate dikinase] + AMP + H(+). It carries out the reaction N(tele)-phospho-L-histidyl/O-phospho-L-threonyl-[pyruvate, phosphate dikinase] + phosphate + H(+) = N(tele)-phospho-L-histidyl/L-threonyl-[pyruvate, phosphate dikinase] + diphosphate. Its function is as follows. Bifunctional serine/threonine kinase and phosphorylase involved in the regulation of the pyruvate, phosphate dikinase (PPDK) by catalyzing its phosphorylation/dephosphorylation. The polypeptide is Putative pyruvate, phosphate dikinase regulatory protein (Rickettsia felis (strain ATCC VR-1525 / URRWXCal2) (Rickettsia azadi)).